The following is a 48-amino-acid chain: Photosystem II reaction center protein K (48 aa).

Positions 1–11 are excised as a propeptide; sequence MFPSTNQEVLA. The chain crosses the membrane as a helical span at residues 23-43; sequence IVDVLPIIPLLFLLLAFVWQA.

It belongs to the PsbK family. PSII is composed of 1 copy each of membrane proteins PsbA, PsbB, PsbC, PsbD, PsbE, PsbF, PsbH, PsbI, PsbJ, PsbK, PsbL, PsbM, PsbT, PsbY, PsbZ, Psb30/Ycf12, at least 3 peripheral proteins of the oxygen-evolving complex and a large number of cofactors. It forms dimeric complexes.

Its subcellular location is the plastid. It localises to the chloroplast thylakoid membrane. One of the components of the core complex of photosystem II (PSII). PSII is a light-driven water:plastoquinone oxidoreductase that uses light energy to abstract electrons from H(2)O, generating O(2) and a proton gradient subsequently used for ATP formation. It consists of a core antenna complex that captures photons, and an electron transfer chain that converts photonic excitation into a charge separation. This chain is Photosystem II reaction center protein K, found in Euglena sanguinea.